A 67-amino-acid polypeptide reads, in one-letter code: Protein AaeX (67 aa).

The next 2 helical transmembrane spans lie at valine 3–valine 23 and leucine 43–serine 63.

It belongs to the AaeX family.

The protein localises to the cell membrane. The sequence is that of Protein AaeX from Erwinia tasmaniensis (strain DSM 17950 / CFBP 7177 / CIP 109463 / NCPPB 4357 / Et1/99).